We begin with the raw amino-acid sequence, 315 residues long: Aspartate carbamoyltransferase catalytic subunit (315 aa).

2 residues coordinate carbamoyl phosphate: Arg64 and Thr65. Lys92 contributes to the L-aspartate binding site. 3 residues coordinate carbamoyl phosphate: Arg114, His142, and Gln145. The L-aspartate site is built by Arg175 and Arg229. The carbamoyl phosphate site is built by Gly270 and Pro271.

Belongs to the aspartate/ornithine carbamoyltransferase superfamily. ATCase family. Heterododecamer (2C3:3R2) of six catalytic PyrB chains organized as two trimers (C3), and six regulatory PyrI chains organized as three dimers (R2).

It catalyses the reaction carbamoyl phosphate + L-aspartate = N-carbamoyl-L-aspartate + phosphate + H(+). It functions in the pathway pyrimidine metabolism; UMP biosynthesis via de novo pathway; (S)-dihydroorotate from bicarbonate: step 2/3. Functionally, catalyzes the condensation of carbamoyl phosphate and aspartate to form carbamoyl aspartate and inorganic phosphate, the committed step in the de novo pyrimidine nucleotide biosynthesis pathway. The sequence is that of Aspartate carbamoyltransferase catalytic subunit from Xanthobacter autotrophicus (strain ATCC BAA-1158 / Py2).